Reading from the N-terminus, the 418-residue chain is Serine hydroxymethyltransferase (418 aa).

Residues L121 and 125–127 (GHL) contribute to the (6S)-5,6,7,8-tetrahydrofolate site. Position 230 is an N6-(pyridoxal phosphate)lysine (K230). 355–357 (SPF) is a (6S)-5,6,7,8-tetrahydrofolate binding site.

The protein belongs to the SHMT family. As to quaternary structure, homodimer. Pyridoxal 5'-phosphate serves as cofactor.

The protein resides in the cytoplasm. The enzyme catalyses (6R)-5,10-methylene-5,6,7,8-tetrahydrofolate + glycine + H2O = (6S)-5,6,7,8-tetrahydrofolate + L-serine. It functions in the pathway one-carbon metabolism; tetrahydrofolate interconversion. The protein operates within amino-acid biosynthesis; glycine biosynthesis; glycine from L-serine: step 1/1. Functionally, catalyzes the reversible interconversion of serine and glycine with tetrahydrofolate (THF) serving as the one-carbon carrier. This reaction serves as the major source of one-carbon groups required for the biosynthesis of purines, thymidylate, methionine, and other important biomolecules. Also exhibits THF-independent aldolase activity toward beta-hydroxyamino acids, producing glycine and aldehydes, via a retro-aldol mechanism. In Streptococcus pyogenes serotype M6 (strain ATCC BAA-946 / MGAS10394), this protein is Serine hydroxymethyltransferase.